The primary structure comprises 251 residues: Outer membrane protein assembly factor BamD (251 aa).

A signal peptide spans 1-19 (MKLTKLLSALLVIGLVLGG). A lipid anchor (N-palmitoyl cysteine) is attached at cysteine 20. Cysteine 20 carries the S-diacylglycerol cysteine lipid modification. 3 TPR repeats span residues 33 to 66 (IATLYNEGIILLDKKKYKKAAEEFGKIFYQHPGN), 70 to 103 (PQAELMQAYSLFLAAQYEEAVDILNMFINLHPAN), and 166 to 199 (AGKEMMIGRFYLKKKNPMAAINRFEEVIDNYQTT).

The protein belongs to the BamD family. In terms of assembly, part of the Bam complex.

The protein localises to the cell outer membrane. In terms of biological role, part of the outer membrane protein assembly complex, which is involved in assembly and insertion of beta-barrel proteins into the outer membrane. This is Outer membrane protein assembly factor BamD from Rickettsia prowazekii (strain Madrid E).